The sequence spans 372 residues: 3-dehydroquinate synthase (372 aa).

Residues 116-120 (GVVGD), 140-141 (TT), Lys-153, Lys-162, and 180-183 (TLKT) each bind NAD(+). Glu-195, His-260, and His-277 together coordinate Zn(2+).

This sequence belongs to the sugar phosphate cyclases superfamily. Dehydroquinate synthase family. Requires NAD(+) as cofactor. It depends on Co(2+) as a cofactor. Zn(2+) is required as a cofactor.

It localises to the cytoplasm. It catalyses the reaction 7-phospho-2-dehydro-3-deoxy-D-arabino-heptonate = 3-dehydroquinate + phosphate. It functions in the pathway metabolic intermediate biosynthesis; chorismate biosynthesis; chorismate from D-erythrose 4-phosphate and phosphoenolpyruvate: step 2/7. In terms of biological role, catalyzes the conversion of 3-deoxy-D-arabino-heptulosonate 7-phosphate (DAHP) to dehydroquinate (DHQ). This is 3-dehydroquinate synthase from Prochlorococcus marinus (strain MIT 9313).